Consider the following 271-residue polypeptide: RxLR effector protein PITG_15679 (271 aa).

Residues 1–18 (MKVLQLIALTALVSSCVA) form the signal peptide. The RxLR-dEER signature appears at 49 to 69 (RSLRRYDLEGLDSVNSNREER). The region spanning 212 to 271 (RLLSANVVMRLNDKGEKQILLISSSNPKKGDFLLPKGGWDKGEDVKKAALREVIEEGGVR) is the Nudix hydrolase domain. Positions 248-269 (GGWDKGEDVKKAALREVIEEGG) match the Nudix box motif.

In the N-terminal section; belongs to the RxLR effector family. It in the C-terminal section; belongs to the Nudix hydrolase family.

It is found in the secreted. The protein localises to the host cytoplasm. The protein resides in the host nucleus. Its function is as follows. Effector that enhances P.infestans colonization of Nicotiana benthamiana leaves. The polypeptide is RxLR effector protein PITG_15679 (Phytophthora infestans (strain T30-4) (Potato late blight agent)).